The following is a 363-amino-acid chain: MAKDEKKAALDAALKKIEKNFGKGAVMRMGEKADTQISTVPTGSLALDAAIGVGGYPRGRIIEVYGPESSGKTTVALHAVAEVQKRGGTAAYIDAENAMDPAYAEALGVDIDSLILSQPNTGEEGLQIADTLISSGAIDIVVVDSVAALVPRAEIEGEMGDAHVGLQARLMSQALRKLSGTISKTKTIAIFINQIREKVGVMFGNPETTPGGRALKFYSTVRLEVRRAEQIKQSGDVLGNRVKIKVVKNKVAPPFKVAEVDIMYGKGISQSGELLDMAADKDIIDKAGSWYSYKSDRIGQGRENAKKYLEEHPDIYQKVQEQVRQAYGIDEKSIADRENPEKIKEKREETSEENKTDNSEKTK.

66 to 73 (GPESSGKT) contributes to the ATP binding site. The disordered stretch occupies residues 327–363 (YGIDEKSIADRENPEKIKEKREETSEENKTDNSEKTK). Over residues 329-363 (IDEKSIADRENPEKIKEKREETSEENKTDNSEKTK) the composition is skewed to basic and acidic residues.

This sequence belongs to the RecA family.

It localises to the cytoplasm. In terms of biological role, can catalyze the hydrolysis of ATP in the presence of single-stranded DNA, the ATP-dependent uptake of single-stranded DNA by duplex DNA, and the ATP-dependent hybridization of homologous single-stranded DNAs. It interacts with LexA causing its activation and leading to its autocatalytic cleavage. This chain is Protein RecA, found in Lactobacillus acidophilus (strain ATCC 700396 / NCK56 / N2 / NCFM).